Here is a 275-residue protein sequence, read N- to C-terminus: UDP-Gal:alpha-D-GlcNAc-diphosphoundecaprenol beta-1,3-galactosyltransferase (275 aa).

The protein belongs to the glycosyltransferase 2 family. Mn(2+) is required as a cofactor.

It localises to the cell inner membrane. The catalysed reaction is N-acetyl-alpha-D-glucosaminyl-di-trans,octa-cis-undecaprenyl diphosphate + UDP-alpha-D-galactose = beta-D-Gal-(1-&gt;3)-alpha-D-GlcNAc-di-trans,octa-cis-undecaprenyl diphosphate + UDP + H(+). Its pathway is bacterial outer membrane biogenesis; LPS O-antigen biosynthesis. In terms of biological role, catalyzes the addition of Gal, the second sugar moiety of the O7-antigen repeating unit, to GlcNAc-pyrophosphate-undecaprenol. This chain is UDP-Gal:alpha-D-GlcNAc-diphosphoundecaprenol beta-1,3-galactosyltransferase (wbbD), found in Escherichia coli.